The sequence spans 163 residues: NADH-quinone oxidoreductase subunit I (163 aa).

4Fe-4S ferredoxin-type domains are found at residues 53-83 (LRRY…IEAG) and 94-123 (VRYD…EGPN). [4Fe-4S] cluster contacts are provided by cysteine 63, cysteine 66, cysteine 69, cysteine 73, cysteine 103, cysteine 106, cysteine 109, and cysteine 113.

Belongs to the complex I 23 kDa subunit family. In terms of assembly, NDH-1 is composed of 14 different subunits. Subunits NuoA, H, J, K, L, M, N constitute the membrane sector of the complex. It depends on [4Fe-4S] cluster as a cofactor.

Its subcellular location is the cell inner membrane. The enzyme catalyses a quinone + NADH + 5 H(+)(in) = a quinol + NAD(+) + 4 H(+)(out). Its function is as follows. NDH-1 shuttles electrons from NADH, via FMN and iron-sulfur (Fe-S) centers, to quinones in the respiratory chain. The immediate electron acceptor for the enzyme in this species is believed to be ubiquinone. Couples the redox reaction to proton translocation (for every two electrons transferred, four hydrogen ions are translocated across the cytoplasmic membrane), and thus conserves the redox energy in a proton gradient. The protein is NADH-quinone oxidoreductase subunit I of Rhizobium johnstonii (strain DSM 114642 / LMG 32736 / 3841) (Rhizobium leguminosarum bv. viciae).